The chain runs to 225 residues: E3 ubiquitin-protein ligase ATL59 (225 aa).

A helical membrane pass occupies residues 22-42 (FTFIVCVPICVILIVLLVLYI). Residues 97-139 (CSVCLGDYQAEEKLQQMPSCGHTFHMECIDLWLTSHTTCPLCR) form an RING-type; atypical zinc finger.

The protein belongs to the RING-type zinc finger family. ATL subfamily.

It localises to the membrane. It catalyses the reaction S-ubiquitinyl-[E2 ubiquitin-conjugating enzyme]-L-cysteine + [acceptor protein]-L-lysine = [E2 ubiquitin-conjugating enzyme]-L-cysteine + N(6)-ubiquitinyl-[acceptor protein]-L-lysine.. Its pathway is protein modification; protein ubiquitination. Functionally, E3 ubiquitin-protein ligase able to catalyze polyubiquitination with ubiquitin-conjugating enzyme E2 UBC8, UBC10, UBC11, and UBC34 in vitro. The protein is E3 ubiquitin-protein ligase ATL59 (ATL59) of Arabidopsis thaliana (Mouse-ear cress).